Here is a 393-residue protein sequence, read N- to C-terminus: Prokineticin receptor 1 (393 aa).

Residues 1-63 (MEITMGVMDE…NSRTFFAAKI (63 aa)) are Extracellular-facing. N-linked (GlcNAc...) asparagine glycosylation is found at Asn-11, Asn-14, and Asn-36. The chain crosses the membrane as a helical span at residues 64-84 (VIGMALVGIMLVCGIGNFIFI). At 85–98 (AALARYKKLRNLTN) the chain is on the cytoplasmic side. Residues 99–119 (LLIANLAISDFLVAIVCCPFE) form a helical membrane-spanning segment. Topologically, residues 120–145 (MDYYVVRQLSWEHGHVLCASVNYLRT) are extracellular. Cys-137 and Cys-217 form a disulfide bridge. Residues 146 to 166 (VSLYVSTNALLAIAIDRYLAI) form a helical membrane-spanning segment. Over 167–179 (VHPLRPRMKYQTA) the chain is Cytoplasmic. A helical membrane pass occupies residues 180 to 200 (TGLIALVWVVSILVAIPSAYF). At 201–232 (TTETVLVIVKSQEKIFCGQIWPVDQQIYYKSY) the chain is on the extracellular side. A helical membrane pass occupies residues 233–253 (FLFIFGIEFVGPVVTMTLCYA). Residues 254 to 282 (RISRELWFKAVPGFQTEQIRKRLRCRRKT) are Cytoplasmic-facing. The chain crosses the membrane as a helical span at residues 283-303 (VLVLMCILTAYVLCWAPFYGF). Residues 304 to 322 (AIVRDFFPTVFVKEKHYLT) lie on the Extracellular side of the membrane. The chain crosses the membrane as a helical span at residues 323–343 (AFYVVECIAMSNSMINTVCFV). At 344–393 (TVKNNTIKYFKKIMLLHWKASYNGSKSSGDLDLKTTGVPATEEVDCIGLK) the chain is on the cytoplasmic side.

It belongs to the G-protein coupled receptor 1 family.

Its subcellular location is the cell membrane. Its function is as follows. Receptor for prokineticin 1. Exclusively coupled to the G(q) subclass of heteromeric G proteins. Activation leads to mobilization of calcium, stimulation of phosphoinositide turnover and activation of p44/p42 mitogen-activated protein kinase. May play a role during early pregnancy. The sequence is that of Prokineticin receptor 1 (PROKR1) from Bos taurus (Bovine).